The primary structure comprises 436 residues: F-box/LRR-repeat protein 20 (436 aa).

The 47-residue stretch at 22-68 folds into the F-box domain; that stretch reads AVINKKLPKELLLRIFSFLDVVTLCRCAQVSRAWNVLALDGSNWQRI. LRR repeat units follow at residues 74–100, 101–126, 127–152, 153–178, 179–204, 205–230, 231–256, 257–282, 283–308, 309–334, 335–363, 364–388, and 389–414; these read QRDI…SLRG, CLGV…SLNG, CTKT…DLAS, CTSI…NISW, CDQV…FLKG, CTQL…NLQT, CLQI…CASG, CSNI…EVAR, CSQL…DLEE, CVQI…SLSH, CELI…ELDN, CPLI…ELYD, and CQQI…AYFA. Thr-417 is modified (phosphothreonine). Phosphoserine is present on Ser-421.

As to quaternary structure, interacts with SKP1 and CUL1. Highly expressed in brain.

It localises to the cytoplasm. In terms of biological role, substrate-recognition component of the SCF (SKP1-CUL1-F-box protein)-type E3 ubiquitin ligase complex. Isoform 3 regulates neural transmission by binding and ubiquitinating RIMS1, a modulator of presynaptic plasticity. The sequence is that of F-box/LRR-repeat protein 20 (Fbxl20) from Mus musculus (Mouse).